Here is a 286-residue protein sequence, read N- to C-terminus: 4-hydroxybenzoate octaprenyltransferase (286 aa).

The next 7 helical transmembrane spans lie at 20-40, 43-63, 95-115, 142-162, 167-187, 210-230, and 234-254; these read IGTL…AGGM, LKVL…GCII, ILFA…NPLV, FLGV…TGEV, WWLF…YAMV, QIIG…GWAA, and LVYG…QKLI.

It belongs to the UbiA prenyltransferase family. The cofactor is Mg(2+).

It localises to the cell inner membrane. It carries out the reaction all-trans-octaprenyl diphosphate + 4-hydroxybenzoate = 4-hydroxy-3-(all-trans-octaprenyl)benzoate + diphosphate. It participates in cofactor biosynthesis; ubiquinone biosynthesis. Catalyzes the prenylation of para-hydroxybenzoate (PHB) with an all-trans polyprenyl group. Mediates the second step in the final reaction sequence of ubiquinone-8 (UQ-8) biosynthesis, which is the condensation of the polyisoprenoid side chain with PHB, generating the first membrane-bound Q intermediate 3-octaprenyl-4-hydroxybenzoate. The chain is 4-hydroxybenzoate octaprenyltransferase from Shewanella sediminis (strain HAW-EB3).